A 345-amino-acid polypeptide reads, in one-letter code: NADPH-dependent oxidoreductase 2-alkenal reductase (345 aa).

NADP(+) contacts are provided by residues 52–53 (PY), 163–169 (AASGAVG), Gly188, Lys192, Tyr208, Asn232, Cys254, Tyr260, 284–286 (FVV), Phe330, and 334–336 (NVG). Tyr53 is a substrate binding site. Tyr260 is a binding site for substrate.

Belongs to the NADP-dependent oxidoreductase L4BD family. As to quaternary structure, homodimer. As to expression, expressed in leaves.

The protein resides in the cytoplasm. Its subcellular location is the nucleus. It localises to the nucleoplasm. It carries out the reaction an n-alkanal + NAD(+) = an alk-2-enal + NADH + H(+). The catalysed reaction is an n-alkanal + NADP(+) = an alk-2-enal + NADPH + H(+). Its activity is regulated as follows. Inhibited by N-ethylmaleimide and p-chloromercuribenzoic acid. Its function is as follows. Involved in the detoxification of reactive carbonyls. Acts on lipid peroxide-derived reactive aldehydes. Specific to a double bond activated by an adjacent carbonyl group. Can use both quinones and diamide as substrates, but not menadione, ferricyanide or phylloquinone. Can use 4-hydroxy-(2E)-nonenal (HNE), 4-hydroxy-(2E)-hexenal (HHE), (2E)-nonenal, (2E)-hexenal, (2E)-pentenal, propenal (acrolein), 3-buten-2-one and 3-penten-2-one, but not (R)-(-)-carvone, n-nonanal, n-hexanal, (3Z)-hexanal, cyclohex-2-en-1-one or 12-oxo phytodienoic acid (OPDA) as electron acceptors. Catalyzes the reduction of the alpha,beta-unsaturated bond of 2-alkenals, of lipid peroxide-derived oxenes 9-oxo-10(E),12(Z)-octadecadienoic acid (9-KODE) and 13-oxo-9(Z),11(E)-octadecadienoic acid (13-KODE), as well as 4-oxo-(2E)-nonenal and 4-hydroxynonenal. Can use 12-oxo-10(E) dodecanoate (traumatin), trans-1,3 diphenyl-2-propenone, trans-1,4-diphenyl-2-butene-1,4-dione, 9-oxo-12,13-epoxy-(10E)-octadecenoic acid (trans-EKODE-1b) and 9,13-dihydroxy-10-oxo-11-octadecenoic acid as substrates. Catalyzes the reduction of the 7-8 double bond of phenylpropanal substrates, such as p-coumaryl aldehyde and coniferyl aldehyde (in vitro). Has activity towards toxic substrates, such as 4-hydroxy-(2E)-nonenal (in vitro). May play a distinct role in plant antioxidant defense and is possibly involved in NAD(P)/NAD(P)H homeostasis. The polypeptide is NADPH-dependent oxidoreductase 2-alkenal reductase (Arabidopsis thaliana (Mouse-ear cress)).